The sequence spans 449 residues: Tubulin alpha chain (449 aa).

Residues Gln11, Glu71, Ser140, Gly144, Thr145, Thr179, Asn206, and Asn228 each contribute to the GTP site. Mg(2+) is bound at residue Glu71. Glu254 is a catalytic residue.

The protein belongs to the tubulin family. Dimer of alpha and beta chains. A typical microtubule is a hollow water-filled tube with an outer diameter of 25 nm and an inner diameter of 15 nM. Alpha-beta heterodimers associate head-to-tail to form protofilaments running lengthwise along the microtubule wall with the beta-tubulin subunit facing the microtubule plus end conferring a structural polarity. Microtubules usually have 13 protofilaments but different protofilament numbers can be found in some organisms and specialized cells. The cofactor is Mg(2+).

It localises to the cytoplasm. Its subcellular location is the cytoskeleton. It carries out the reaction GTP + H2O = GDP + phosphate + H(+). Functionally, tubulin is the major constituent of microtubules, a cylinder consisting of laterally associated linear protofilaments composed of alpha- and beta-tubulin heterodimers. Microtubules grow by the addition of GTP-tubulin dimers to the microtubule end, where a stabilizing cap forms. Below the cap, tubulin dimers are in GDP-bound state, owing to GTPase activity of alpha-tubulin. The sequence is that of Tubulin alpha chain (TUB1) from Pneumocystis carinii.